Consider the following 109-residue polypeptide: Flagellar hook-basal body complex protein FliE (109 aa).

This sequence belongs to the FliE family.

Its subcellular location is the bacterial flagellum basal body. This chain is Flagellar hook-basal body complex protein FliE, found in Pseudomonas paraeruginosa (strain DSM 24068 / PA7) (Pseudomonas aeruginosa (strain PA7)).